Consider the following 87-residue polypeptide: MRRGIHPEYRPVVYRDRAADFAFLTRSTATSEQTIEWTDGNTYPVVDVQISSASHPFWTGRQRLVDAAGRVEKFRAKYARRGPQRHR.

This sequence belongs to the bacterial ribosomal protein bL31 family. Type B subfamily. Part of the 50S ribosomal subunit.

This chain is Large ribosomal subunit protein bL31B, found in Salinispora arenicola (strain CNS-205).